Reading from the N-terminus, the 361-residue chain is S-adenosylmethionine:tRNA ribosyltransferase-isomerase (361 aa).

The protein belongs to the QueA family. Monomer.

The protein resides in the cytoplasm. It catalyses the reaction 7-aminomethyl-7-carbaguanosine(34) in tRNA + S-adenosyl-L-methionine = epoxyqueuosine(34) in tRNA + adenine + L-methionine + 2 H(+). It functions in the pathway tRNA modification; tRNA-queuosine biosynthesis. Transfers and isomerizes the ribose moiety from AdoMet to the 7-aminomethyl group of 7-deazaguanine (preQ1-tRNA) to give epoxyqueuosine (oQ-tRNA). The polypeptide is S-adenosylmethionine:tRNA ribosyltransferase-isomerase (Methylocella silvestris (strain DSM 15510 / CIP 108128 / LMG 27833 / NCIMB 13906 / BL2)).